A 701-amino-acid chain; its full sequence is Glycine--tRNA ligase beta subunit (701 aa).

The protein belongs to the class-II aminoacyl-tRNA synthetase family. As to quaternary structure, tetramer of two alpha and two beta subunits.

The protein localises to the cytoplasm. It catalyses the reaction tRNA(Gly) + glycine + ATP = glycyl-tRNA(Gly) + AMP + diphosphate. This chain is Glycine--tRNA ligase beta subunit, found in Thiobacillus denitrificans (strain ATCC 25259 / T1).